The sequence spans 265 residues: Ribosomal RNA small subunit methyltransferase A (265 aa).

Positions 17, 19, 44, 65, 90, and 112 each coordinate S-adenosyl-L-methionine.

It belongs to the class I-like SAM-binding methyltransferase superfamily. rRNA adenine N(6)-methyltransferase family. RsmA subfamily.

Its subcellular location is the cytoplasm. The enzyme catalyses adenosine(1518)/adenosine(1519) in 16S rRNA + 4 S-adenosyl-L-methionine = N(6)-dimethyladenosine(1518)/N(6)-dimethyladenosine(1519) in 16S rRNA + 4 S-adenosyl-L-homocysteine + 4 H(+). Its function is as follows. Specifically dimethylates two adjacent adenosines (A1518 and A1519) in the loop of a conserved hairpin near the 3'-end of 16S rRNA in the 30S particle. May play a critical role in biogenesis of 30S subunits. The polypeptide is Ribosomal RNA small subunit methyltransferase A (Xylella fastidiosa (strain Temecula1 / ATCC 700964)).